We begin with the raw amino-acid sequence, 309 residues long: MANSLFQKHIISIPELNRSELELIVETAGILKAEPNPELLKNKVVASCFFEPSTRTRLSFETAVQRLGGTVIGFDNGGNTSLAKKGETLADSVQVISSYVDAFVMRHPQEGAARLASEFSNGVPIINGGDGANQHPTQTLLDLFSIFETQGRLDNLNVAFVGDLKYGRTVHSLTQALSKFNNINFFFVAPEILAMPDYICEELDEAGINYSLHASMEEVIPELDVLYMTRVQKERFDESEYAHMKAAYILTADMLAEARDNMKILHPLPRIDEITVDVDKTKHAYYFQQAENGVYAREALLALVLNEQL.

Carbamoyl phosphate is bound by residues arginine 55 and threonine 56. Lysine 85 lines the L-aspartate pocket. Residues arginine 106, histidine 135, and glutamine 138 each contribute to the carbamoyl phosphate site. Residues arginine 168 and arginine 230 each contribute to the L-aspartate site. Leucine 268 and proline 269 together coordinate carbamoyl phosphate.

Belongs to the aspartate/ornithine carbamoyltransferase superfamily. ATCase family. As to quaternary structure, heterododecamer (2C3:3R2) of six catalytic PyrB chains organized as two trimers (C3), and six regulatory PyrI chains organized as three dimers (R2).

The enzyme catalyses carbamoyl phosphate + L-aspartate = N-carbamoyl-L-aspartate + phosphate + H(+). Its pathway is pyrimidine metabolism; UMP biosynthesis via de novo pathway; (S)-dihydroorotate from bicarbonate: step 2/3. In terms of biological role, catalyzes the condensation of carbamoyl phosphate and aspartate to form carbamoyl aspartate and inorganic phosphate, the committed step in the de novo pyrimidine nucleotide biosynthesis pathway. The chain is Aspartate carbamoyltransferase catalytic subunit from Photobacterium profundum (strain SS9).